A 191-amino-acid polypeptide reads, in one-letter code: MKILEDRIRQDGTVLTGNVLKVDNFLNHQVDPQLMNELGQEFARRFQDAHITKILTVESSGIAPAVMAGLHLNVPVIFARKHKSLTLTDNLYTAKVYSYTKQVTNEISIDRRFLAADDRVLIIDDFLANGQAVQGLLDIAKTAQITVAGVGVVIEKRFQKGHQMVTDAGIQLEALASIASFEAGQVIFAQD.

Leu-20 and Asn-27 together coordinate xanthine. 128–132 (ANGQA) is a 5-phospho-alpha-D-ribose 1-diphosphate binding site. Lys-156 serves as a coordination point for xanthine.

The protein belongs to the purine/pyrimidine phosphoribosyltransferase family. Xpt subfamily. Homodimer.

The protein resides in the cytoplasm. The enzyme catalyses XMP + diphosphate = xanthine + 5-phospho-alpha-D-ribose 1-diphosphate. It functions in the pathway purine metabolism; XMP biosynthesis via salvage pathway; XMP from xanthine: step 1/1. Converts the preformed base xanthine, a product of nucleic acid breakdown, to xanthosine 5'-monophosphate (XMP), so it can be reused for RNA or DNA synthesis. This chain is Xanthine phosphoribosyltransferase, found in Levilactobacillus brevis (strain ATCC 367 / BCRC 12310 / CIP 105137 / JCM 1170 / LMG 11437 / NCIMB 947 / NCTC 947) (Lactobacillus brevis).